The following is a 61-amino-acid chain: Small ribosomal subunit protein uS14 (61 aa).

Positions 24, 27, 40, and 43 each coordinate Zn(2+).

This sequence belongs to the universal ribosomal protein uS14 family. Zinc-binding uS14 subfamily. Part of the 30S ribosomal subunit. Contacts proteins S3 and S10. It depends on Zn(2+) as a cofactor.

Functionally, binds 16S rRNA, required for the assembly of 30S particles and may also be responsible for determining the conformation of the 16S rRNA at the A site. The protein is Small ribosomal subunit protein uS14 of Treponema pallidum (strain Nichols).